Consider the following 75-residue polypeptide: ATP synthase subunit c (75 aa).

The next 2 membrane-spanning stretches (helical) occupy residues 13-33 and 54-74; these read LNVV…GILI and MFLG…LAFI.

The protein belongs to the ATPase C chain family. In terms of assembly, F-type ATPases have 2 components, F(1) - the catalytic core - and F(0) - the membrane proton channel. F(1) has five subunits: alpha(3), beta(3), gamma(1), delta(1), epsilon(1). F(0) has three main subunits: a(1), b(2) and c(10-14). The alpha and beta chains form an alternating ring which encloses part of the gamma chain. F(1) is attached to F(0) by a central stalk formed by the gamma and epsilon chains, while a peripheral stalk is formed by the delta and b chains.

The protein resides in the cell membrane. In terms of biological role, f(1)F(0) ATP synthase produces ATP from ADP in the presence of a proton or sodium gradient. F-type ATPases consist of two structural domains, F(1) containing the extramembraneous catalytic core and F(0) containing the membrane proton channel, linked together by a central stalk and a peripheral stalk. During catalysis, ATP synthesis in the catalytic domain of F(1) is coupled via a rotary mechanism of the central stalk subunits to proton translocation. Functionally, key component of the F(0) channel; it plays a direct role in translocation across the membrane. A homomeric c-ring of between 10-14 subunits forms the central stalk rotor element with the F(1) delta and epsilon subunits. This chain is ATP synthase subunit c, found in Bifidobacterium adolescentis (strain ATCC 15703 / DSM 20083 / NCTC 11814 / E194a).